A 427-amino-acid polypeptide reads, in one-letter code: BSD domain-containing protein 1 (427 aa).

Phosphoserine occurs at positions 92 and 166. One can recognise a BSD domain in the interval 146-198 (WLSEFCLEEKKGEISELLVGSPSIRALYTKMVPAAVSHSEFWHRYFYKVHQLE). Residues 208–397 (KQRADQSISE…ISEDWEKDFD (190 aa)) are disordered. Over residues 219–229 (PGWEEEEEELE) the composition is skewed to acidic residues. Residues 236–245 (KEAKIPKETK) show a composition bias toward basic and acidic residues. The span at 268 to 279 (PAEATPSESSES) shows a compositional bias: low complexity. The segment covering 324 to 333 (GPPPPPPSKP) has biased composition (pro residues). Residues 347–364 (PPARVETLREEVPTDLRV) show a composition bias toward basic and acidic residues. At Thr-353 the chain carries Phosphothreonine. The segment covering 368 to 387 (NSDSGKSTPSNNGKKGSSTD) has biased composition (polar residues). Residues Ser-384 and Ser-385 each carry the phosphoserine modification. Positions 388 to 397 (ISEDWEKDFD) are enriched in acidic residues. A Phosphoserine modification is found at Ser-415.

This is BSD domain-containing protein 1 (Bsdc1) from Mus musculus (Mouse).